The primary structure comprises 172 residues: Arginine repressor (172 aa).

It belongs to the ArgR family.

Its subcellular location is the cytoplasm. The protein operates within amino-acid biosynthesis; L-arginine biosynthesis [regulation]. Regulates arginine biosynthesis genes. The chain is Arginine repressor from Bifidobacterium adolescentis (strain ATCC 15703 / DSM 20083 / NCTC 11814 / E194a).